Reading from the N-terminus, the 36-residue chain is Termicin (36 aa).

Disulfide bonds link cysteine 2/cysteine 24, cysteine 7/cysteine 29, and cysteine 11/cysteine 31. Residue glycine 36 is modified to Glycine amide.

Expressed in salivary glands and hemocytes.

The protein resides in the secreted. In terms of biological role, weak activity against Gram-positive bacteria B.megaterium, S.pyogenes and M.luteus, strong activity against yeasts C.albicans, C.neoformans and S.cerevisiae and filamentous fungi F.oxysporum, F.culmorum, N.crassa and N.hematococca. Less active against filamentous fungus T.viride. Inactive against Gram-positive bacteria A.viridans and S.aureus, filamentous fungi A.fumigatus and B.bassiana and yeast C.glabrata. In Pseudacanthotermes spiniger, this protein is Termicin.